The primary structure comprises 596 residues: Elongation factor 4 (596 aa).

The tr-type G domain occupies 2-184 (KHIRNFSIIA…VIVEQIPPPE (183 aa)). GTP-binding positions include 14–19 (DHGKST) and 131–134 (NKID).

The protein belongs to the TRAFAC class translation factor GTPase superfamily. Classic translation factor GTPase family. LepA subfamily.

The protein localises to the cell inner membrane. It carries out the reaction GTP + H2O = GDP + phosphate + H(+). Its function is as follows. Required for accurate and efficient protein synthesis under certain stress conditions. May act as a fidelity factor of the translation reaction, by catalyzing a one-codon backward translocation of tRNAs on improperly translocated ribosomes. Back-translocation proceeds from a post-translocation (POST) complex to a pre-translocation (PRE) complex, thus giving elongation factor G a second chance to translocate the tRNAs correctly. Binds to ribosomes in a GTP-dependent manner. The protein is Elongation factor 4 of Shewanella sp. (strain MR-7).